Here is a 71-residue protein sequence, read N- to C-terminus: Small, acid-soluble spore protein I (71 aa).

The protein belongs to the SspI family.

The protein localises to the spore core. This is Small, acid-soluble spore protein I from Geobacillus sp. (strain WCH70).